We begin with the raw amino-acid sequence, 1140 residues long: GPI inositol-deacylase (1140 aa).

The segment at 1–84 (MHRRSSGSSP…TTWASHDPPR (84 aa)) is disordered. A compositionally biased stretch (polar residues) spans 55–78 (GKSTPRSRNSSTWRTLSSATTTWA). Residue asparagine 63 is glycosylated (N-linked (GlcNAc...) asparagine). The chain crosses the membrane as a helical span at residues 117–137 (SCSILTALTTILACVFLFSIV). Serine 304 is a catalytic residue. Residues 782–802 (LVMRYRTVFAAFPLLVVSLTL) form a helical membrane-spanning segment. N-linked (GlcNAc...) asparagine glycosylation is present at asparagine 862. Transmembrane regions (helical) follow at residues 882 to 902 (AFFW…CVLL), 905 to 925 (VALI…SKSG), 952 to 972 (VLLV…VACI), 1002 to 1022 (SVFI…LVWA), 1039 to 1059 (VLSI…SMIP), 1070 to 1090 (SVLL…YAYI), and 1094 to 1114 (LVNI…GFSL).

This sequence belongs to the GPI inositol-deacylase family.

Its subcellular location is the endoplasmic reticulum membrane. In terms of biological role, involved in inositol deacylation of GPI-anchored proteins which plays important roles in the quality control and ER-associated degradation of GPI-anchored proteins. The protein is GPI inositol-deacylase (bst1) of Emericella nidulans (strain FGSC A4 / ATCC 38163 / CBS 112.46 / NRRL 194 / M139) (Aspergillus nidulans).